A 220-amino-acid chain; its full sequence is Deoxyribose-phosphate aldolase (220 aa).

Residue Asp92 is the Proton donor/acceptor of the active site. The active-site Schiff-base intermediate with acetaldehyde is the Lys155. Residue Lys184 is the Proton donor/acceptor of the active site.

Belongs to the DeoC/FbaB aldolase family. DeoC type 1 subfamily.

The protein resides in the cytoplasm. The enzyme catalyses 2-deoxy-D-ribose 5-phosphate = D-glyceraldehyde 3-phosphate + acetaldehyde. It functions in the pathway carbohydrate degradation; 2-deoxy-D-ribose 1-phosphate degradation; D-glyceraldehyde 3-phosphate and acetaldehyde from 2-deoxy-alpha-D-ribose 1-phosphate: step 2/2. Its function is as follows. Catalyzes a reversible aldol reaction between acetaldehyde and D-glyceraldehyde 3-phosphate to generate 2-deoxy-D-ribose 5-phosphate. In Natranaerobius thermophilus (strain ATCC BAA-1301 / DSM 18059 / JW/NM-WN-LF), this protein is Deoxyribose-phosphate aldolase.